Here is a 177-residue protein sequence, read N- to C-terminus: Interleukin-19 (177 aa).

The N-terminal stretch at M1–G24 is a signal peptide. Disulfide bonds link C28–C121, C75–C127, and C76–C129. N56 carries N-linked (GlcNAc...) asparagine glycosylation. N135 is a glycosylation site (N-linked (GlcNAc...) asparagine).

It belongs to the IL-10 family.

Its subcellular location is the secreted. In terms of biological role, cytokine that functions as an anti-inflammatory and proangiogenic factor. Polarizes adaptive immunity to an anti-inflammatory phenotype through induction of T-helper 2 responses by both down-regulation of IFN-gamma and up-regulation of IL4 and IL13. Produced by osteocytes, stimulates granulopoiesis and neutrophil formation. Exerts its biological effect through a receptor complex consisting of a heterodimer of IL20RA and IL20RB. In turn, activates the Janus kinase (JAK) and signal transducer and activator of transcription (STAT) pathway, and importantly, STAT3. The protein is Interleukin-19 (IL19) of Homo sapiens (Human).